Reading from the N-terminus, the 1010-residue chain is BrkA autotransporter (1010 aa).

The N-terminal stretch at 1-42 (MYLDRFRQCPSSLQIPRSAWRLHALAAALALAGMARLAPAAA) is a signal peptide. The Autotransporter domain maps to 742–1010 (LRADAGGPWA…SFHAGYRYSF (269 aa)).

It localises to the periplasm. The protein resides in the secreted. It is found in the cell surface. The protein localises to the cell outer membrane. Functionally, inhibits the classical pathway of complement activation and prevents accumulation of deposited C4. The sequence is that of BrkA autotransporter from Bordetella pertussis (strain Tohama I / ATCC BAA-589 / NCTC 13251).